Reading from the N-terminus, the 165-residue chain is P2Y purinoceptor 4 (165 aa).

A helical membrane pass occupies residues 1-16 (SDTLYVLSLPTLVYYY). The Extracellular portion of the chain corresponds to 17-30 (AARNHWPFGTGFCK). The helical transmembrane segment at 31–51 (FVRFLFYWNLYCSVLFLTCIS) threads the bilayer. Topologically, residues 52 to 74 (VHRYMGICHPLRALRWGRPRFAS) are cytoplasmic. A helical transmembrane segment spans residues 75-95 (LLCLAVWLVVAGCLVPNLFFV). The Extracellular segment spans residues 96 to 124 (TTSPNGTTILCHDTTRPEEFDHYVHFSSA). Asn-100 carries an N-linked (GlcNAc...) asparagine glycan. A helical transmembrane segment spans residues 125-145 (VMVLLFGLPFLVTLVCYGLMA). Residues 146–165 (RRLYRPLPGAGQSSSRLRSL) are Cytoplasmic-facing.

This sequence belongs to the G-protein coupled receptor 1 family.

Its subcellular location is the cell membrane. Its function is as follows. Receptor for UTP and UDP coupled to G-proteins that activate a phosphatidylinositol-calcium second messenger system. This chain is P2Y purinoceptor 4 (P2RY4), found in Cricetulus griseus (Chinese hamster).